A 29-amino-acid chain; its full sequence is Omega-conotoxins GVIIA/GVIIB (29 aa).

3 disulfide bridges follow: Cys1–Cys16, Cys8–Cys19, and Cys15–Cys26. Residues Pro4 and Pro7 each carry the 4-hydroxyproline modification.

As to expression, expressed by the venom duct.

It is found in the secreted. In terms of biological role, omega-conotoxins act at presynaptic membranes, they bind and block voltage-gated calcium channels (Cav). The protein is Omega-conotoxins GVIIA/GVIIB of Conus geographus (Geography cone).